A 364-amino-acid chain; its full sequence is Endopolygalacturonase B (364 aa).

The first 20 residues, 1–20 (MHFLQNSLIAAAMGAALVAA), serve as a signal peptide directing secretion. The propeptide occupies 21 to 29 (APAADLDAR). Cysteine 32 and cysteine 47 form a disulfide bridge. Asparagine 138 is a glycosylation site (N-linked (GlcNAc...) asparagine). PbH1 repeat units follow at residues 159 to 188 (SDHLTISDVTIDNSAGTSKGHNTDAFDIGS), 189 to 210 (STYITIDGATVYNQDDCIAINS), 211 to 231 (GEHITFTNGYCSGGHGLSIGS), 240 to 261 (VKSVTISNSKVVDSQNGVRIKT), 269 to 291 (VTDVTFQDIELSGITKYGLIVEQ), and 303 to 348 (TNGV…DITG). The Proton donor role is filled by aspartate 203. Residues cysteine 205 and cysteine 221 are joined by a disulfide bond. Histidine 225 is a catalytic residue. 2 cysteine pairs are disulfide-bonded: cysteine 331–cysteine 336 and cysteine 355–cysteine 364.

It belongs to the glycosyl hydrolase 28 family.

It is found in the secreted. It catalyses the reaction (1,4-alpha-D-galacturonosyl)n+m + H2O = (1,4-alpha-D-galacturonosyl)n + (1,4-alpha-D-galacturonosyl)m.. Functionally, involved in maceration and soft-rotting of plant tissue. Hydrolyzes the 1,4-alpha glycosidic bonds of de-esterified pectate in the smooth region of the plant cell wall. The chain is Endopolygalacturonase B (pgaB) from Emericella nidulans (strain FGSC A4 / ATCC 38163 / CBS 112.46 / NRRL 194 / M139) (Aspergillus nidulans).